We begin with the raw amino-acid sequence, 58 residues long: Large ribosomal subunit protein uL30 (58 aa).

The protein belongs to the universal ribosomal protein uL30 family. As to quaternary structure, part of the 50S ribosomal subunit.

The chain is Large ribosomal subunit protein uL30 from Cytophaga hutchinsonii (strain ATCC 33406 / DSM 1761 / CIP 103989 / NBRC 15051 / NCIMB 9469 / D465).